The following is a 391-amino-acid chain: Bifunctional enzyme IspD/IspF (391 aa).

The tract at residues 1 to 230 (MLAAGRGKRA…KKKMQMFPDI (230 aa)) is 2-C-methyl-D-erythritol 4-phosphate cytidylyltransferase. The tract at residues 231-391 (RTGNGYDVHS…TVLYPGEIPK (161 aa)) is 2-C-methyl-D-erythritol 2,4-cyclodiphosphate synthase. 2 residues coordinate a divalent metal cation: D237 and H239. 4-CDP-2-C-methyl-D-erythritol 2-phosphate is bound by residues 237-239 (DVH) and 263-264 (HS). H271 lines the a divalent metal cation pocket. Residues 285-287 (DIG), 361-364 (TTNE), F368, and R371 contribute to the 4-CDP-2-C-methyl-D-erythritol 2-phosphate site.

This sequence in the N-terminal section; belongs to the IspD/TarI cytidylyltransferase family. IspD subfamily. It in the C-terminal section; belongs to the IspF family. Requires a divalent metal cation as cofactor.

It catalyses the reaction 2-C-methyl-D-erythritol 4-phosphate + CTP + H(+) = 4-CDP-2-C-methyl-D-erythritol + diphosphate. It carries out the reaction 4-CDP-2-C-methyl-D-erythritol 2-phosphate = 2-C-methyl-D-erythritol 2,4-cyclic diphosphate + CMP. It participates in isoprenoid biosynthesis; isopentenyl diphosphate biosynthesis via DXP pathway; isopentenyl diphosphate from 1-deoxy-D-xylulose 5-phosphate: step 2/6. The protein operates within isoprenoid biosynthesis; isopentenyl diphosphate biosynthesis via DXP pathway; isopentenyl diphosphate from 1-deoxy-D-xylulose 5-phosphate: step 4/6. In terms of biological role, bifunctional enzyme that catalyzes the formation of 4-diphosphocytidyl-2-C-methyl-D-erythritol from CTP and 2-C-methyl-D-erythritol 4-phosphate (MEP) (IspD), and catalyzes the conversion of 4-diphosphocytidyl-2-C-methyl-D-erythritol 2-phosphate (CDP-ME2P) to 2-C-methyl-D-erythritol 2,4-cyclodiphosphate (ME-CPP) with a corresponding release of cytidine 5-monophosphate (CMP) (IspF). The chain is Bifunctional enzyme IspD/IspF from Bartonella quintana (strain Toulouse) (Rochalimaea quintana).